Consider the following 109-residue polypeptide: Large ribosomal subunit protein eL30 (109 aa).

The protein belongs to the eukaryotic ribosomal protein eL30 family. As to quaternary structure, component of the large ribosomal subunit (LSU). Mature N.crassa ribosomes consist of a small (40S) and a large (60S) subunit. The 40S small subunit contains 1 molecule of ribosomal RNA (18S rRNA) and at least 32 different proteins. The large 60S subunit contains 3 rRNA molecules (26S, 5.8S and 5S rRNA) and at least 42 different proteins.

The protein localises to the cytoplasm. Functionally, component of the ribosome, a large ribonucleoprotein complex responsible for the synthesis of proteins in the cell. The small ribosomal subunit (SSU) binds messenger RNAs (mRNAs) and translates the encoded message by selecting cognate aminoacyl-transfer RNA (tRNA) molecules. The large subunit (LSU) contains the ribosomal catalytic site termed the peptidyl transferase center (PTC), which catalyzes the formation of peptide bonds, thereby polymerizing the amino acids delivered by tRNAs into a polypeptide chain. The nascent polypeptides leave the ribosome through a tunnel in the LSU and interact with protein factors that function in enzymatic processing, targeting, and the membrane insertion of nascent chains at the exit of the ribosomal tunnel. The polypeptide is Large ribosomal subunit protein eL30 (rpl-30) (Neurospora crassa (strain ATCC 24698 / 74-OR23-1A / CBS 708.71 / DSM 1257 / FGSC 987)).